A 61-amino-acid chain; its full sequence is Small ribosomal subunit protein uS14 (61 aa).

Positions 24, 27, 40, and 43 each coordinate Zn(2+).

It belongs to the universal ribosomal protein uS14 family. Zinc-binding uS14 subfamily. Part of the 30S ribosomal subunit. Contacts proteins S3 and S10. The cofactor is Zn(2+).

In terms of biological role, binds 16S rRNA, required for the assembly of 30S particles and may also be responsible for determining the conformation of the 16S rRNA at the A site. The protein is Small ribosomal subunit protein uS14 of Desulforamulus reducens (strain ATCC BAA-1160 / DSM 100696 / MI-1) (Desulfotomaculum reducens).